The chain runs to 291 residues: Elongation factor Ts (291 aa).

The segment at 79–82 is involved in Mg(2+) ion dislocation from EF-Tu; that stretch reads TDFV.

Belongs to the EF-Ts family.

Its subcellular location is the cytoplasm. Its function is as follows. Associates with the EF-Tu.GDP complex and induces the exchange of GDP to GTP. It remains bound to the aminoacyl-tRNA.EF-Tu.GTP complex up to the GTP hydrolysis stage on the ribosome. This is Elongation factor Ts from Dinoroseobacter shibae (strain DSM 16493 / NCIMB 14021 / DFL 12).